A 466-amino-acid chain; its full sequence is 55 kDa erythrocyte membrane protein (466 aa).

Position 2 is an N-acetylthreonine (Thr2). Residues Ser13 and Ser19 each carry the phosphoserine modification. Thr49 is subject to Phosphothreonine. A phosphoserine mark is found at Ser52, Ser57, and Ser110. The PDZ domain maps to 71–152 (LIQFEKVTEE…MISLKVIPNQ (82 aa)). The SH3 domain occupies 158–228 (ALQMFMRAQF…PSPELQEWRV (71 aa)). A Phosphoserine modification is found at Ser243. The segment at 268–466 (VVSYEEVVRL…PQWVPVSWVY (199 aa)) is interaction with PALS1. The region spanning 282 to 451 (RKTLVLIGAS…TLKKLQEAFD (170 aa)) is the Guanylate kinase-like domain.

The protein belongs to the MAGUK family. In terms of assembly, heterodimer with PALS1. Interacts with DLG5 and NF2. Interacts (via guanylate kinase-like domain) with WHRN (via third PDZ domain). Palmitoylated. As to expression, ubiquitous.

It localises to the cell membrane. Its subcellular location is the cell projection. The protein resides in the stereocilium. Its function is as follows. Essential regulator of neutrophil polarity. Regulates neutrophil polarization by regulating AKT1 phosphorylation through a mechanism that is independent of PIK3CG activity. This chain is 55 kDa erythrocyte membrane protein (MPP1), found in Homo sapiens (Human).